A 306-amino-acid chain; its full sequence is Elongation factor Ts (306 aa).

The involved in Mg(2+) ion dislocation from EF-Tu stretch occupies residues 80–83 (TDFV).

The protein belongs to the EF-Ts family.

Its subcellular location is the cytoplasm. Functionally, associates with the EF-Tu.GDP complex and induces the exchange of GDP to GTP. It remains bound to the aminoacyl-tRNA.EF-Tu.GTP complex up to the GTP hydrolysis stage on the ribosome. The chain is Elongation factor Ts from Clostridium novyi (strain NT).